The chain runs to 360 residues: Phenylalanine--tRNA ligase alpha subunit (360 aa).

E260 lines the Mg(2+) pocket.

This sequence belongs to the class-II aminoacyl-tRNA synthetase family. Phe-tRNA synthetase alpha subunit type 1 subfamily. Tetramer of two alpha and two beta subunits. The cofactor is Mg(2+).

The protein localises to the cytoplasm. It catalyses the reaction tRNA(Phe) + L-phenylalanine + ATP = L-phenylalanyl-tRNA(Phe) + AMP + diphosphate + H(+). The protein is Phenylalanine--tRNA ligase alpha subunit of Methylobacterium radiotolerans (strain ATCC 27329 / DSM 1819 / JCM 2831 / NBRC 15690 / NCIMB 10815 / 0-1).